The following is a 377-amino-acid chain: NADH dehydrogenase [ubiquinone] 1 alpha subcomplex subunit 9, mitochondrial (377 aa).

Residues 1-35 (MAAAVRFRVVRALPMSRPAITAAATSVFCGSSHRQ) constitute a mitochondrion transit peptide. At Lys-175 the chain carries N6-succinyllysine. An N6-acetyllysine mark is found at Lys-189 and Lys-370.

It belongs to the complex I NDUFA9 subunit family. In terms of assembly, complex I is composed of 45 different subunits. This a component of the hydrophobic protein fraction. Interacts with BLOC1S1. Interacts with SLC2A4. Interacts with CLOCK. Interacts with RAB5IF. FAD is required as a cofactor. In terms of processing, acetylated on lysine residues. BLOC1S1 is required for acetylation. Acetylated by CLOCK in a circadian manner.

The protein resides in the mitochondrion matrix. In terms of biological role, accessory subunit of the mitochondrial membrane respiratory chain NADH dehydrogenase (Complex I), that is believed not to be involved in catalysis. Complex I functions in the transfer of electrons from NADH to the respiratory chain. The immediate electron acceptor for the enzyme is believed to be ubiquinone. The protein is NADH dehydrogenase [ubiquinone] 1 alpha subcomplex subunit 9, mitochondrial (Ndufa9) of Mus musculus (Mouse).